Consider the following 183-residue polypeptide: Threonylcarbamoyl-AMP synthase (183 aa).

One can recognise a YrdC-like domain in the interval 1 to 183 (MELAQIVERL…IFSRQIFRRG (183 aa)).

This sequence belongs to the SUA5 family. TsaC subfamily.

It localises to the cytoplasm. It carries out the reaction L-threonine + hydrogencarbonate + ATP = L-threonylcarbamoyladenylate + diphosphate + H2O. Required for the formation of a threonylcarbamoyl group on adenosine at position 37 (t(6)A37) in tRNAs that read codons beginning with adenine. Catalyzes the conversion of L-threonine, HCO(3)(-)/CO(2) and ATP to give threonylcarbamoyl-AMP (TC-AMP) as the acyladenylate intermediate, with the release of diphosphate. This Mannheimia succiniciproducens (strain KCTC 0769BP / MBEL55E) protein is Threonylcarbamoyl-AMP synthase.